The sequence spans 196 residues: MSKEGLIAAKELKRLQTQSVRLDRFIGSHVSRLLKSDLVSVLAEFQRQNQVFLCMKLYEVVRREIWYRPDMFFYRDMLMMLARNKKVDETKKVWEDLKKEEVLFDQHTFGDLVRGFLDNELPLEAMRLYGEMRESPDRPLSLPFRVILKGLVPYPELREKVKDDFLELFPGMIVYDPPEDICEDSDEEARTDSDLE.

PPR repeat units lie at residues 70–104 (DMFFYRDMLMMLARNKKVDETKKVWEDLKKEEVLF) and 105–139 (DQHTFGDLVRGFLDNELPLEAMRLYGEMRESPDRP).

Belongs to the PPR family. P subfamily.

The chain is Pentatricopeptide repeat-containing protein At1g62350 from Arabidopsis thaliana (Mouse-ear cress).